Reading from the N-terminus, the 67-residue chain is Large ribosomal subunit protein bL35 (67 aa).

It belongs to the bacterial ribosomal protein bL35 family.

The polypeptide is Large ribosomal subunit protein bL35 (Mesorhizobium japonicum (strain LMG 29417 / CECT 9101 / MAFF 303099) (Mesorhizobium loti (strain MAFF 303099))).